The chain runs to 536 residues: Membrane protein insertase YidC (536 aa).

The chain crosses the membrane as a helical span at residues 5-25; the sequence is ALIAVILSIVFFYGYSALFPP. Residues 30–54 form a disordered region; sequence APAPSAQQAVTGSQPGAPQASVAAV. The segment covering 31 to 54 has biased composition (low complexity); the sequence is PAPSAQQAVTGSQPGAPQASVAAV. Helical transmembrane passes span 350-370, 420-440, 454-474, and 494-514; these read YGIA…PLTH, LPML…MFSI, LAGK…MVIQ, and PVVF…YWLV.

Belongs to the OXA1/ALB3/YidC family. Type 1 subfamily. Interacts with the Sec translocase complex via SecD. Specifically interacts with transmembrane segments of nascent integral membrane proteins during membrane integration.

The protein localises to the cell inner membrane. Its function is as follows. Required for the insertion and/or proper folding and/or complex formation of integral membrane proteins into the membrane. Involved in integration of membrane proteins that insert both dependently and independently of the Sec translocase complex, as well as at least some lipoproteins. Aids folding of multispanning membrane proteins. This is Membrane protein insertase YidC from Geobacter metallireducens (strain ATCC 53774 / DSM 7210 / GS-15).